A 194-amino-acid polypeptide reads, in one-letter code: Crossover junction endodeoxyribonuclease RuvC (194 aa).

Catalysis depends on residues Asp7, Glu68, and Asp141. Residues Asp7, Glu68, and Asp141 each contribute to the Mg(2+) site.

The protein belongs to the RuvC family. As to quaternary structure, homodimer which binds Holliday junction (HJ) DNA. The HJ becomes 2-fold symmetrical on binding to RuvC with unstacked arms; it has a different conformation from HJ DNA in complex with RuvA. In the full resolvosome a probable DNA-RuvA(4)-RuvB(12)-RuvC(2) complex forms which resolves the HJ. Mg(2+) is required as a cofactor.

It localises to the cytoplasm. It carries out the reaction Endonucleolytic cleavage at a junction such as a reciprocal single-stranded crossover between two homologous DNA duplexes (Holliday junction).. In terms of biological role, the RuvA-RuvB-RuvC complex processes Holliday junction (HJ) DNA during genetic recombination and DNA repair. Endonuclease that resolves HJ intermediates. Cleaves cruciform DNA by making single-stranded nicks across the HJ at symmetrical positions within the homologous arms, yielding a 5'-phosphate and a 3'-hydroxyl group; requires a central core of homology in the junction. The consensus cleavage sequence is 5'-(A/T)TT(C/G)-3'. Cleavage occurs on the 3'-side of the TT dinucleotide at the point of strand exchange. HJ branch migration catalyzed by RuvA-RuvB allows RuvC to scan DNA until it finds its consensus sequence, where it cleaves and resolves the cruciform DNA. In Mycolicibacterium vanbaalenii (strain DSM 7251 / JCM 13017 / BCRC 16820 / KCTC 9966 / NRRL B-24157 / PYR-1) (Mycobacterium vanbaalenii), this protein is Crossover junction endodeoxyribonuclease RuvC.